The following is a 338-amino-acid chain: Trans-enoyl reductase fsr4 (338 aa).

65–68 (KDWK) is a binding site for NADP(+). Residue 147–153 (AAFTAAC) coordinates substrate. NADP(+) contacts are provided by residues 182–185 (SSAV), 205–208 (AGRA), Tyr227, and 277–278 (II).

It belongs to the zinc-containing alcohol dehydrogenase family.

In terms of biological role, trans-enoyl reductase; part of the gene cluster that mediates the biosynthesis of fusarubins, highly pigmented naphthoquinones responsible for the coloration of the fruiting bodies. The non-reducing polyketide synthase FSR1 is responsible for the condensation of seven acetyl-CoA units to yield a haptaketide. After rings A and B are formed by aldol-type cyclization, the PKS-derived product is released as 6-O-demethylfusarubinaldehyde. Then, two hydroxyl groups at C-5 and C-10 are incorporated by FSR3, and simultaneously hydroxyl groups at C-6 and C-8 are methylated by FSR2. The aldehyde is, on the one hand, reduced by FSR3 to 8-O-methylfusarubin alcohol, which equilibrates mainly with 8-O-methylfusarubin and only small amounts of 8-O-methylnectriafurone. On the other hand, the aldehyde can be oxidized to form 8-O-methylfusarubinic acid, a reaction driven by FSR3 equilibrating with 8-O-methylfusarubinlactone, finally resulting in 8-O-methylanhydrofusarubinlactol after a further reduction step and loss of water. 8-O-Methylfusarubinic acid can also undergo decarboxylation, resulting in 8-O-methyl-13-hydroxynorjavanicin after another hydroxylation step at C-13. Both steps are most likely also accomplished by FSR3. No enzymatic function has been determined so far for either FSR4 and FSR5. Their deletion does not alter the product spectrum, but the possibility that they catalyze specific enzymatic steps during perithecium development cannot be ruled out. FSR4 might possess a regulatory function in the biosynthesis of fusarubins. This chain is Trans-enoyl reductase fsr4, found in Gibberella fujikuroi (strain CBS 195.34 / IMI 58289 / NRRL A-6831) (Bakanae and foot rot disease fungus).